Consider the following 217-residue polypeptide: Dephospho-CoA kinase (217 aa).

One can recognise a DPCK domain in the interval Ile-4 to Asn-203. Ser-12–Thr-17 contacts ATP.

Belongs to the CoaE family.

Its subcellular location is the cytoplasm. The catalysed reaction is 3'-dephospho-CoA + ATP = ADP + CoA + H(+). Its pathway is cofactor biosynthesis; coenzyme A biosynthesis; CoA from (R)-pantothenate: step 5/5. Its function is as follows. Catalyzes the phosphorylation of the 3'-hydroxyl group of dephosphocoenzyme A to form coenzyme A. This is Dephospho-CoA kinase from Buchnera aphidicola subsp. Acyrthosiphon pisum (strain APS) (Acyrthosiphon pisum symbiotic bacterium).